Reading from the N-terminus, the 374-residue chain is MTTNLLDFDLDGLAAFCERLGEKRFRATQLFRWIHQRGASDFDQMSDLAKSLREKLRGCAHVAGLQAISEHVSADGTVKWLFDVGDGNAVETVFIPEDDRGTLCISSQAGCAVGCRFCSTGHQGFSRNLTTGEILAQLWYAEHALRQRRGDGERVISNVVMMGMGEPLQNYAALVPALRVMLDDHGYGLSRRRVTVSTSGVVPMMDRLAQDCPVALAVSLHAPNDVLRDNLVPLNRKYPLHELLAACRRYLDHAPRDFITFEYCMLEGVNDQPEHARQLIDLVGRKAADGGVSCKFNLIPFNPFPASGLRRSPPAAVTAFAQLLSDAGIVTTVRKTRGDDIDAACGQLAGDVKDRTRVNERMAKLRTIEIKPVI.

Catalysis depends on Glu91, which acts as the Proton acceptor. Positions 97–340 (EDDRGTLCIS…TTVRKTRGDD (244 aa)) constitute a Radical SAM core domain. Cys104 and Cys345 are joined by a disulfide. [4Fe-4S] cluster is bound by residues Cys111, Cys115, and Cys118. Residues 165–166 (GE), Ser197, 219–221 (SLH), and Asn302 contribute to the S-adenosyl-L-methionine site. The active-site S-methylcysteine intermediate is the Cys345.

It belongs to the radical SAM superfamily. RlmN family. [4Fe-4S] cluster serves as cofactor.

The protein resides in the cytoplasm. The enzyme catalyses adenosine(2503) in 23S rRNA + 2 reduced [2Fe-2S]-[ferredoxin] + 2 S-adenosyl-L-methionine = 2-methyladenosine(2503) in 23S rRNA + 5'-deoxyadenosine + L-methionine + 2 oxidized [2Fe-2S]-[ferredoxin] + S-adenosyl-L-homocysteine. It catalyses the reaction adenosine(37) in tRNA + 2 reduced [2Fe-2S]-[ferredoxin] + 2 S-adenosyl-L-methionine = 2-methyladenosine(37) in tRNA + 5'-deoxyadenosine + L-methionine + 2 oxidized [2Fe-2S]-[ferredoxin] + S-adenosyl-L-homocysteine. In terms of biological role, specifically methylates position 2 of adenine 2503 in 23S rRNA and position 2 of adenine 37 in tRNAs. m2A2503 modification seems to play a crucial role in the proofreading step occurring at the peptidyl transferase center and thus would serve to optimize ribosomal fidelity. This Acidovorax sp. (strain JS42) protein is Dual-specificity RNA methyltransferase RlmN.